Consider the following 69-residue polypeptide: Sperm protamine P1 (69 aa).

The disordered stretch occupies residues 1–69 (MASYRNSRSR…RKRNNNTENK (69 aa)). 2 stretches are compositionally biased toward basic residues: residues 7–25 (SRSR…RSRV) and 34–63 (RSSR…RKRN).

This sequence belongs to the protamine P1 family. In terms of tissue distribution, testis.

Its subcellular location is the nucleus. It is found in the chromosome. Protamines substitute for histones in the chromatin of sperm during the haploid phase of spermatogenesis. They compact sperm DNA into a highly condensed, stable and inactive complex. The sequence is that of Sperm protamine P1 (PRM1) from Perameles gunnii (Eastern barred bandicoot).